A 1397-amino-acid chain; its full sequence is Probable cyclin-dependent serine/threonine-protein kinase DDB_G0292550 (1397 aa).

The Protein kinase domain occupies 4-287; the sequence is FQIIELIGSG…TKEALNHPWF (284 aa). Residues 10–18 and lysine 33 each bind ATP; that span reads IGSGSYGKV. Aspartate 124 (proton acceptor) is an active-site residue. Disordered stretches follow at residues 412 to 567, 671 to 728, 763 to 831, 845 to 949, 996 to 1101, 1115 to 1174, 1227 to 1324, and 1340 to 1397; these read NNNN…NNNN, PLSI…NNGF, NEMG…NGNN, NNNN…YANH, NGLA…NTHN, NNGF…NSPV, NSAS…SFGL, and KKKK…IVLD. Over residues 676–715 the composition is skewed to low complexity; sequence SQHHNTSSSDTHNNNNNNYNNNNNNNNNINNNNINSIHNQ. Low complexity-rich tracts occupy residues 845–941, 1012–1021, 1028–1101, and 1115–1155; these read NNNN…NGNG, NSNNNNSGNN, NTFN…NTHN, and NNGF…TKNN. A compositionally biased stretch (polar residues) spans 1156–1171; it reads TQFGPNILSSTQTSHN. 2 stretches are compositionally biased toward low complexity: residues 1253 to 1321 and 1354 to 1380; these read NNNN…NNNS and SSSQQSQTQQQHQIQQQSQTQQQSQTQ.

This sequence belongs to the protein kinase superfamily. CMGC Ser/Thr protein kinase family. CDC2/CDKX subfamily.

The catalysed reaction is L-seryl-[protein] + ATP = O-phospho-L-seryl-[protein] + ADP + H(+). It catalyses the reaction L-threonyl-[protein] + ATP = O-phospho-L-threonyl-[protein] + ADP + H(+). The polypeptide is Probable cyclin-dependent serine/threonine-protein kinase DDB_G0292550 (Dictyostelium discoideum (Social amoeba)).